A 117-amino-acid polypeptide reads, in one-letter code: Cell division protein FtsL (117 aa).

The Cytoplasmic segment spans residues methionine 1–lysine 35. Residues valine 36–alanine 56 traverse the membrane as a helical segment. Residues tyrosine 57–glutamate 117 are Extracellular-facing.

Belongs to the FtsL family. Monomer. Interacts with DivIB and DivIC. Interaction with DivIC stabilizes FtsL against RasP cleavage. Post-translationally, cleaved by RasP. Cleavage is important for turnover and function of FtsL.

Its subcellular location is the cell membrane. Essential cell division protein that may play a structural role. Probably involved in the regulation of the timing of cell division. Also required for sporulation. The chain is Cell division protein FtsL from Bacillus subtilis (strain 168).